Reading from the N-terminus, the 274-residue chain is Large ribosomal subunit protein uL2 (274 aa).

The interval V195–K274 is disordered. 2 stretches are compositionally biased toward basic residues: residues K207–N220 and P244–S264.

The protein belongs to the universal ribosomal protein uL2 family. As to quaternary structure, part of the 50S ribosomal subunit. Forms a bridge to the 30S subunit in the 70S ribosome.

Its function is as follows. One of the primary rRNA binding proteins. Required for association of the 30S and 50S subunits to form the 70S ribosome, for tRNA binding and peptide bond formation. It has been suggested to have peptidyltransferase activity; this is somewhat controversial. Makes several contacts with the 16S rRNA in the 70S ribosome. This is Large ribosomal subunit protein uL2 from Bacteroides thetaiotaomicron (strain ATCC 29148 / DSM 2079 / JCM 5827 / CCUG 10774 / NCTC 10582 / VPI-5482 / E50).